The chain runs to 346 residues: DNA ligase (346 aa).

ATP contacts are provided by residues 32 to 35 (DCKY), R39, 55 to 57 (RVS), E93, E142, and R149. The active-site N6-AMP-lysine intermediate is the K34. An a divalent metal cation-binding site is contributed by E223. Positions 238 and 244 each coordinate ATP.

Belongs to the ATP-dependent DNA ligase family. A divalent metal cation serves as cofactor.

The enzyme catalyses ATP + (deoxyribonucleotide)n-3'-hydroxyl + 5'-phospho-(deoxyribonucleotide)m = (deoxyribonucleotide)n+m + AMP + diphosphate.. In terms of biological role, DNA ligase, which is expressed in the early stage of lytic development, has been implicated in T7 DNA synthesis and genetic recombination. It may also play a role in T7 DNA repair. This Enterobacteria phage T3 (Bacteriophage T3) protein is DNA ligase (1.3).